The sequence spans 132 residues: Profilin-1 (132 aa).

Belongs to the profilin family. In terms of assembly, occurs in many kinds of cells as a complex with monomeric actin in a 1:1 ratio. In terms of tissue distribution, expressed in the nerve ring during late embryonic stages. In adults, expression is seen in the neurons, vulva and somatic gonad.

The protein localises to the cytoplasm. Its subcellular location is the cytoskeleton. Binds to actin and affects the structure of the cytoskeleton. At high concentrations, profilin prevents the polymerization of actin, whereas it enhances it at low concentrations. By binding to PIP2, it inhibits the formation of IP3 and DG. Also binds to poly(L-proline) and phosphatidylinositol 4,5-bisphosphate micelles. This is Profilin-1 (pfn-1) from Caenorhabditis elegans.